We begin with the raw amino-acid sequence, 1070 residues long: Carbamoyl phosphate synthase large chain (1070 aa).

The carboxyphosphate synthetic domain stretch occupies residues 1 to 399 (MPKREDIKKV…SLLKAFKSLD (399 aa)). Arg129, Arg169, Gly175, Gly176, Glu208, Val210, Glu215, Gly241, Val242, His243, Gln284, and Glu296 together coordinate ATP. In terms of domain architecture, ATP-grasp 1 spans 133-325 (KETMLRIGEK…IARVTAKIAI (193 aa)). The Mg(2+) site is built by Gln284, Glu296, and Asn298. Mn(2+) contacts are provided by Gln284, Glu296, and Asn298. Positions 400–540 (IDSQLGNKRW…YSTYEDTCET (141 aa)) are oligomerization domain. The interval 541–931 (NPTDRKKILI…YKAELAADNL (391 aa)) is carbamoyl phosphate synthetic domain. In terms of domain architecture, ATP-grasp 2 spans 672–863 (YVLMQKFGIL…LAKIAARVIA (192 aa)). ATP-binding residues include Arg708, Asp747, Leu749, Glu754, Gly779, Val780, His781, Ser782, Gln822, and Glu834. Mg(2+)-binding residues include Gln822, Glu834, and Asn836. The Mn(2+) site is built by Gln822, Glu834, and Asn836. Positions 930-1070 (NLLPLTGKVF…INEYHKEMGL (141 aa)) constitute an MGS-like domain. The segment at 932–1070 (LPLTGKVFLS…INEYHKEMGL (139 aa)) is allosteric domain.

This sequence belongs to the CarB family. As to quaternary structure, composed of two chains; the small (or glutamine) chain promotes the hydrolysis of glutamine to ammonia, which is used by the large (or ammonia) chain to synthesize carbamoyl phosphate. Tetramer of heterodimers (alpha,beta)4. Mg(2+) is required as a cofactor. It depends on Mn(2+) as a cofactor.

It catalyses the reaction hydrogencarbonate + L-glutamine + 2 ATP + H2O = carbamoyl phosphate + L-glutamate + 2 ADP + phosphate + 2 H(+). It carries out the reaction hydrogencarbonate + NH4(+) + 2 ATP = carbamoyl phosphate + 2 ADP + phosphate + 2 H(+). The protein operates within amino-acid biosynthesis; L-arginine biosynthesis; carbamoyl phosphate from bicarbonate: step 1/1. It functions in the pathway pyrimidine metabolism; UMP biosynthesis via de novo pathway; (S)-dihydroorotate from bicarbonate: step 1/3. Functionally, large subunit of the glutamine-dependent carbamoyl phosphate synthetase (CPSase). CPSase catalyzes the formation of carbamoyl phosphate from the ammonia moiety of glutamine, carbonate, and phosphate donated by ATP, constituting the first step of 2 biosynthetic pathways, one leading to arginine and/or urea and the other to pyrimidine nucleotides. The large subunit (synthetase) binds the substrates ammonia (free or transferred from glutamine from the small subunit), hydrogencarbonate and ATP and carries out an ATP-coupled ligase reaction, activating hydrogencarbonate by forming carboxy phosphate which reacts with ammonia to form carbamoyl phosphate. The sequence is that of Carbamoyl phosphate synthase large chain from Methanosarcina acetivorans (strain ATCC 35395 / DSM 2834 / JCM 12185 / C2A).